A 172-amino-acid polypeptide reads, in one-letter code: MVDKRESYTKEDLLASSRGELFGPQGPQLPAPNMLMMDRVVKMTEDGGKYGKGYVEAELDITPDLWFFGCHFIGDPVMPGCLGLDAMWQLVGFYLGWLGGEGKGRALGVGEVKFTGQVLPTAKKVTYRIHFKRVINRRLVMGIADGEVLVDGQQIYTADELKVGLFKDTSSF.

Residue His-71 is part of the active site.

Belongs to the thioester dehydratase family. FabA subfamily. As to quaternary structure, homodimer.

Its subcellular location is the cytoplasm. The enzyme catalyses a (3R)-hydroxyacyl-[ACP] = a (2E)-enoyl-[ACP] + H2O. It carries out the reaction (3R)-hydroxydecanoyl-[ACP] = (2E)-decenoyl-[ACP] + H2O. The catalysed reaction is (2E)-decenoyl-[ACP] = (3Z)-decenoyl-[ACP]. Its pathway is lipid metabolism; fatty acid biosynthesis. In terms of biological role, necessary for the introduction of cis unsaturation into fatty acids. Catalyzes the dehydration of (3R)-3-hydroxydecanoyl-ACP to E-(2)-decenoyl-ACP and then its isomerization to Z-(3)-decenoyl-ACP. Can catalyze the dehydratase reaction for beta-hydroxyacyl-ACPs with saturated chain lengths up to 16:0, being most active on intermediate chain length. The polypeptide is 3-hydroxydecanoyl-[acyl-carrier-protein] dehydratase (Pectobacterium carotovorum subsp. carotovorum (strain PC1)).